A 483-amino-acid chain; its full sequence is Cobyric acid synthase (483 aa).

Positions 248-435 (VLKVVVPVLP…LHGLFETAAA (188 aa)) constitute a GATase cobBQ-type domain. Cysteine 329 serves as the catalytic Nucleophile. Histidine 427 is an active-site residue.

The protein belongs to the CobB/CobQ family. CobQ subfamily.

Its pathway is cofactor biosynthesis; adenosylcobalamin biosynthesis. Its function is as follows. Catalyzes amidations at positions B, D, E, and G on adenosylcobyrinic A,C-diamide. NH(2) groups are provided by glutamine, and one molecule of ATP is hydrogenolyzed for each amidation. This Pseudomonas fluorescens (strain SBW25) protein is Cobyric acid synthase.